The primary structure comprises 159 residues: Phosphopantetheine adenylyltransferase (159 aa).

Substrate is bound at residue Thr10. ATP contacts are provided by residues 10–11 (TF) and His18. Substrate contacts are provided by Lys42, Met74, and Arg88. Residues 89 to 91 (GLR), Glu99, and 124 to 130 (WSFISSS) contribute to the ATP site.

Belongs to the bacterial CoaD family. As to quaternary structure, homohexamer. Mg(2+) is required as a cofactor.

The protein resides in the cytoplasm. The enzyme catalyses (R)-4'-phosphopantetheine + ATP + H(+) = 3'-dephospho-CoA + diphosphate. The protein operates within cofactor biosynthesis; coenzyme A biosynthesis; CoA from (R)-pantothenate: step 4/5. Functionally, reversibly transfers an adenylyl group from ATP to 4'-phosphopantetheine, yielding dephospho-CoA (dPCoA) and pyrophosphate. The sequence is that of Phosphopantetheine adenylyltransferase from Yersinia pseudotuberculosis serotype I (strain IP32953).